A 1065-amino-acid polypeptide reads, in one-letter code: Presequence protease, mitochondrial (1065 aa).

The transit peptide at 1–42 (MLRSFSGAGKCKCRIPVSRQPVCGRSLRISSTLTPWNQSRRA) directs the protein to the mitochondrion. H117 lines the Zn(2+) pocket. E120 functions as the Proton acceptor in the catalytic mechanism. H121 contacts Zn(2+). E193 is an active-site residue. A Zn(2+)-binding site is contributed by E230.

The protein belongs to the peptidase M16 family. PreP subfamily. As to quaternary structure, monomer and homodimer; homodimerization is induced by binding of the substrate. It depends on Zn(2+) as a cofactor.

The protein resides in the mitochondrion intermembrane space. It localises to the mitochondrion matrix. In terms of biological role, degrades mitochondrial transit peptides after their cleavage in the intermembrane space or in the matrix, and presequence peptides; clearance of these peptides is required to keep the presequence processing machinery running. Preferentially cleaves the N-terminal side of paired basic amino acid residues. Also degrades other unstructured peptides. May function as an ATP-dependent peptidase as opposed to a metalloendopeptidase. The polypeptide is Presequence protease, mitochondrial (cym1) (Aspergillus fumigatus (strain ATCC MYA-4609 / CBS 101355 / FGSC A1100 / Af293) (Neosartorya fumigata)).